Reading from the N-terminus, the 412-residue chain is ATP phosphoribosyltransferase regulatory subunit (412 aa).

This sequence belongs to the class-II aminoacyl-tRNA synthetase family. HisZ subfamily. As to quaternary structure, heteromultimer composed of HisG and HisZ subunits.

It is found in the cytoplasm. It functions in the pathway amino-acid biosynthesis; L-histidine biosynthesis; L-histidine from 5-phospho-alpha-D-ribose 1-diphosphate: step 1/9. Its function is as follows. Required for the first step of histidine biosynthesis. May allow the feedback regulation of ATP phosphoribosyltransferase activity by histidine. This chain is ATP phosphoribosyltransferase regulatory subunit, found in Dehalococcoides mccartyi (strain CBDB1).